The sequence spans 608 residues: ATP-citrate synthase beta chain protein 1 (608 aa).

Residues 214 to 234 (ILRFNNIPQVKMMVVLGELGG) and 265 to 291 (FKSEVQFGHAGAKSGGELESAQAKNQA) contribute to the ATP site. Residue Glu-231 participates in Mg(2+) binding. The active-site Tele-phosphohistidine intermediate is His-273. 292–302 (LKDAGAVVPTS) is a CoA binding site.

This sequence belongs to the succinate/malate CoA ligase alpha subunit family. As to quaternary structure, heterooctamer of 4 alpha and 4 beta chains.

The protein resides in the cytoplasm. The protein localises to the cytosol. It catalyses the reaction oxaloacetate + acetyl-CoA + ADP + phosphate = citrate + ATP + CoA. In terms of biological role, ATP citrate-lyase is the primary enzyme responsible for the synthesis of cytosolic acetyl-CoA, used for the elongation of fatty acids and biosynthesis of isoprenoids, flavonoids and malonated derivatives. May supply substrate to the cytosolic acetyl-CoA carboxylase, which generates the malonyl-CoA used for the synthesis of a multitude of compounds, including very long chain fatty acids and flavonoids. In contrast to all known animal ACL enzymes having a homomeric structure, plant ACLs are composed of alpha and beta chains. This chain is ATP-citrate synthase beta chain protein 1 (ACLB-1), found in Oryza sativa subsp. japonica (Rice).